A 177-amino-acid chain; its full sequence is Ribosome maturation factor RimM (177 aa).

The 78-residue stretch at Glu100–Tyr177 folds into the PRC barrel domain.

Belongs to the RimM family. As to quaternary structure, binds ribosomal protein uS19.

It localises to the cytoplasm. Functionally, an accessory protein needed during the final step in the assembly of 30S ribosomal subunit, possibly for assembly of the head region. Essential for efficient processing of 16S rRNA. May be needed both before and after RbfA during the maturation of 16S rRNA. It has affinity for free ribosomal 30S subunits but not for 70S ribosomes. The sequence is that of Ribosome maturation factor RimM from Psychrobacter cryohalolentis (strain ATCC BAA-1226 / DSM 17306 / VKM B-2378 / K5).